A 186-amino-acid chain; its full sequence is Methyl-CpG-binding domain protein 3-like 1 (186 aa).

The interval 1–104 is transcription repressor; the sequence is MGKTSQRKQC…TSTDTVASAS (104 aa).

Belongs to the MBD3L family. Highly expressed in testis. Not detected in the other tissues tested.

The protein resides in the nucleus. Functionally, transcriptional repressor. The chain is Methyl-CpG-binding domain protein 3-like 1 (Mbd3l1) from Mus musculus (Mouse).